We begin with the raw amino-acid sequence, 122 residues long: Large ribosomal subunit protein uL14c (122 aa).

It belongs to the universal ribosomal protein uL14 family. In terms of assembly, part of the 50S ribosomal subunit.

It localises to the plastid. The protein resides in the chloroplast. Functionally, binds to 23S rRNA. The protein is Large ribosomal subunit protein uL14c of Acorus calamus (Sweet flag).